A 261-amino-acid polypeptide reads, in one-letter code: Gap junction beta-6 protein (261 aa).

Over 1–22 the chain is Cytoplasmic; that stretch reads MDWGTLHTFVGGVNKHSTSIGK. The chain crosses the membrane as a helical span at residues 23–45; the sequence is VWVTVLFVFRVMILVVAAQEVWG. The Extracellular portion of the chain corresponds to 46 to 75; sequence DEQEDFVCNTLQPGCRNVCYDHFFPVSHIR. A helical membrane pass occupies residues 76 to 98; the sequence is LWALQLIFVSTPALLVAMHVAYY. Residues 99-131 are Cytoplasmic-facing; it reads RHEAARRFRRGETRSEFKDLEDIKRQKVRIEGS. Residues 132–154 traverse the membrane as a helical segment; the sequence is LWWTYTSSIFFRIVFEAAFMYVF. At 155–192 the chain is on the extracellular side; that stretch reads YFLYNGYHLPWVLKCGIQPCPNLVDCFISRPTEKTVFT. Residues 193 to 215 traverse the membrane as a helical segment; that stretch reads IFMISASVICMLLNVAELCYLLL. The Cytoplasmic segment spans residues 216–261; that stretch reads KVCFRRSKRAQTQKAPPNHALKESKQNEMNELISEGGQNAITGFPS.

It belongs to the connexin family. Beta-type (group I) subfamily. A connexon is composed of a hexamer of connexins. Interacts with CNST.

The protein resides in the cell membrane. The protein localises to the cell junction. It is found in the gap junction. One gap junction consists of a cluster of closely packed pairs of transmembrane channels, the connexons, through which materials of low MW diffuse from one cell to a neighboring cell. The sequence is that of Gap junction beta-6 protein (GJB6) from Bos taurus (Bovine).